Here is a 337-residue protein sequence, read N- to C-terminus: Pyridoxal 5'-phosphate synthase subunit PdxS (337 aa).

Position 65 (Asp65) interacts with D-ribose 5-phosphate. Catalysis depends on Lys122, which acts as the Schiff-base intermediate with D-ribose 5-phosphate. Gly194 contributes to the D-ribose 5-phosphate binding site. Lys206 lines the D-glyceraldehyde 3-phosphate pocket. D-ribose 5-phosphate is bound by residues Gly255 and 276–277 (GS).

It belongs to the PdxS/SNZ family. As to quaternary structure, in the presence of PdxT, forms a dodecamer of heterodimers.

The enzyme catalyses aldehydo-D-ribose 5-phosphate + D-glyceraldehyde 3-phosphate + L-glutamine = pyridoxal 5'-phosphate + L-glutamate + phosphate + 3 H2O + H(+). It participates in cofactor biosynthesis; pyridoxal 5'-phosphate biosynthesis. Functionally, catalyzes the formation of pyridoxal 5'-phosphate from ribose 5-phosphate (RBP), glyceraldehyde 3-phosphate (G3P) and ammonia. The ammonia is provided by the PdxT subunit. Can also use ribulose 5-phosphate and dihydroxyacetone phosphate as substrates, resulting from enzyme-catalyzed isomerization of RBP and G3P, respectively. The protein is Pyridoxal 5'-phosphate synthase subunit PdxS of Pyrobaculum arsenaticum (strain DSM 13514 / JCM 11321 / PZ6).